The following is a 1216-amino-acid chain: 1-phosphatidylinositol 4,5-bisphosphate phosphodiesterase beta-1 (1216 aa).

Residue Cys-17 is the site of S-palmitoyl cysteine attachment. The residue at position 236 (Ser-236) is a Phosphoserine. The PI-PLC X-box domain occupies 316-467 (EDMSQPLSHY…LMYKILVKNK (152 aa)). Residues His-331 and His-378 contribute to the active site. Ser-417 carries the phosphoserine modification. Residues 469 to 534 (KSHKSSEGSG…MDEGTAGSEA (66 aa)) are disordered. The span at 472–483 (KSSEGSGKKKLS) shows a compositional bias: basic and acidic residues. Over residues 491–501 (SDSSSVFEPSS) the composition is skewed to low complexity. Residues 507–518 (ADTESDDDDDDD) show a composition bias toward acidic residues. At Thr-509 the chain carries Phosphothreonine. Ser-511 and Ser-582 each carry phosphoserine. In terms of domain architecture, PI-PLC Y-box spans 540–656 (MSNLVNYIQP…GYRLKPEFMR (117 aa)). One can recognise a C2 domain in the interval 656–784 (RRPDKHFDPF…CLRNERNQPL (129 aa)). Disordered stretches follow at residues 834 to 891 (DEEE…VKAP), 933 to 993 (LVKR…IEQD), 1071 to 1095 (KMDK…EEEK), and 1172 to 1216 (KISE…DTPL). Ser-887 is subject to Phosphoserine; by PKC. Basic and acidic residues-rich tracts occupy residues 941–951 (TTDLIKEHTTK) and 959–979 (YLRR…KKSE). A phosphoserine mark is found at Ser-978 and Ser-987. The span at 980-991 (PSSPDHVSSTIE) shows a compositional bias: polar residues. Residues 1075 to 1095 (KRQEKITEAKSKDKSQMEEEK) are compositionally biased toward basic and acidic residues. Residues 1187-1198 (TSDSGKLNQKPP) show a composition bias toward polar residues. 2 positions are modified to phosphoserine: Ser-1199 and Ser-1200. The span at 1207–1216 (NPGKEFDTPL) shows a compositional bias: basic and acidic residues.

As to quaternary structure, interacts with DGKQ. Requires Ca(2+) as cofactor. Palmitoylated. Palmitoylation at Cys-17 by ZDHHC21 regulates the signaling activity of PLCB1 and the function of the endothelial barrier. Palmitoylation by ZDHHC21 is stimulated by inflammation.

Its subcellular location is the nucleus membrane. It localises to the cytoplasm. The catalysed reaction is a 1,2-diacyl-sn-glycero-3-phospho-(1D-myo-inositol-4,5-bisphosphate) + H2O = 1D-myo-inositol 1,4,5-trisphosphate + a 1,2-diacyl-sn-glycerol + H(+). It catalyses the reaction a 1,2-diacyl-sn-glycero-3-phospho-(1D-myo-inositol) + H2O = 1D-myo-inositol 1-phosphate + a 1,2-diacyl-sn-glycerol + H(+). In terms of biological role, catalyzes the hydrolysis of 1-phosphatidylinositol 4,5-bisphosphate into diacylglycerol (DAG) and inositol 1,4,5-trisphosphate (IP3) and mediates intracellular signaling downstream of G protein-coupled receptors. Regulates the function of the endothelial barrier. This Bos taurus (Bovine) protein is 1-phosphatidylinositol 4,5-bisphosphate phosphodiesterase beta-1 (PLCB1).